Reading from the N-terminus, the 261-residue chain is Shikimate dehydrogenase (NADP(+)) (261 aa).

Residues 13–15 (SLS) and threonine 60 each bind shikimate. The active-site Proton acceptor is lysine 64. Asparagine 85 and aspartate 100 together coordinate shikimate. Residues 121-125 (GAGGA) and isoleucine 202 contribute to the NADP(+) site. Residue tyrosine 204 participates in shikimate binding. Glycine 225 contributes to the NADP(+) binding site.

It belongs to the shikimate dehydrogenase family. In terms of assembly, homodimer.

The enzyme catalyses shikimate + NADP(+) = 3-dehydroshikimate + NADPH + H(+). It functions in the pathway metabolic intermediate biosynthesis; chorismate biosynthesis; chorismate from D-erythrose 4-phosphate and phosphoenolpyruvate: step 4/7. Involved in the biosynthesis of the chorismate, which leads to the biosynthesis of aromatic amino acids. Catalyzes the reversible NADPH linked reduction of 3-dehydroshikimate (DHSA) to yield shikimate (SA). This chain is Shikimate dehydrogenase (NADP(+)), found in Exiguobacterium sibiricum (strain DSM 17290 / CCUG 55495 / CIP 109462 / JCM 13490 / 255-15).